The following is a 569-amino-acid chain: Potassium-transporting ATPase potassium-binding subunit (569 aa).

Helical transmembrane passes span 11–31 (LLLA…ACVF), 64–84 (LAYT…LYGI), 135–155 (AGLA…ALAV), 179–199 (LYLL…MGIP), 258–278 (FNIL…GKMV), 285–305 (WALI…VYIA), 384–404 (GLYG…LMVG), 423–443 (MLAV…AAVL), 490–510 (LGIS…AIAG), and 531–551 (LFVG…YFPA).

It belongs to the KdpA family. In terms of assembly, the system is composed of three essential subunits: KdpA, KdpB and KdpC.

The protein localises to the cell inner membrane. Its function is as follows. Part of the high-affinity ATP-driven potassium transport (or Kdp) system, which catalyzes the hydrolysis of ATP coupled with the electrogenic transport of potassium into the cytoplasm. This subunit binds the periplasmic potassium ions and delivers the ions to the membrane domain of KdpB through an intramembrane tunnel. This chain is Potassium-transporting ATPase potassium-binding subunit, found in Allorhizobium ampelinum (strain ATCC BAA-846 / DSM 112012 / S4) (Agrobacterium vitis (strain S4)).